Reading from the N-terminus, the 264-residue chain is 3-methyl-2-oxobutanoate hydroxymethyltransferase (264 aa).

Mg(2+) contacts are provided by aspartate 45 and aspartate 84. Residues 45–46 (DS), aspartate 84, and lysine 112 each bind 3-methyl-2-oxobutanoate. Glutamate 114 is a Mg(2+) binding site. Catalysis depends on glutamate 181, which acts as the Proton acceptor.

The protein belongs to the PanB family. In terms of assembly, homodecamer; pentamer of dimers. Mg(2+) serves as cofactor.

The protein resides in the cytoplasm. The enzyme catalyses 3-methyl-2-oxobutanoate + (6R)-5,10-methylene-5,6,7,8-tetrahydrofolate + H2O = 2-dehydropantoate + (6S)-5,6,7,8-tetrahydrofolate. Its pathway is cofactor biosynthesis; (R)-pantothenate biosynthesis; (R)-pantoate from 3-methyl-2-oxobutanoate: step 1/2. Catalyzes the reversible reaction in which hydroxymethyl group from 5,10-methylenetetrahydrofolate is transferred onto alpha-ketoisovalerate to form ketopantoate. This is 3-methyl-2-oxobutanoate hydroxymethyltransferase from Shigella flexneri serotype 5b (strain 8401).